Here is a 665-residue protein sequence, read N- to C-terminus: UvrABC system protein B (665 aa).

Residues 31–414 (DGVKGGEKAQ…EMEQTETVVQ (384 aa)) form the Helicase ATP-binding domain. Residue 44-51 (GATGTGKT) coordinates ATP. The short motif at 97-120 (YYDYYQPEAYVPSSDTYIEKDSSI) is the Beta-hairpin element. The region spanning 435-601 (QIDDLVGEIH…TIIKEIRDLI (167 aa)) is the Helicase C-terminal domain. A UVR domain is found at 629–664 (ADLLMKLEREMKDAAKALDFETAATLRDTILELKAA).

It belongs to the UvrB family. In terms of assembly, forms a heterotetramer with UvrA during the search for lesions. Interacts with UvrC in an incision complex.

It is found in the cytoplasm. The UvrABC repair system catalyzes the recognition and processing of DNA lesions. A damage recognition complex composed of 2 UvrA and 2 UvrB subunits scans DNA for abnormalities. Upon binding of the UvrA(2)B(2) complex to a putative damaged site, the DNA wraps around one UvrB monomer. DNA wrap is dependent on ATP binding by UvrB and probably causes local melting of the DNA helix, facilitating insertion of UvrB beta-hairpin between the DNA strands. Then UvrB probes one DNA strand for the presence of a lesion. If a lesion is found the UvrA subunits dissociate and the UvrB-DNA preincision complex is formed. This complex is subsequently bound by UvrC and the second UvrB is released. If no lesion is found, the DNA wraps around the other UvrB subunit that will check the other stand for damage. The protein is UvrABC system protein B of Enterococcus faecalis (strain ATCC 700802 / V583).